The primary structure comprises 363 residues: Nicotinamide adenine dinucleotide transporter 2, mitochondrial (363 aa).

3 Solcar repeats span residues 15–107 (REVA…LKDV), 115–203 (LSIG…IKQY), and 215–305 (LSPG…MLRF). The next 6 helical transmembrane spans lie at 21–41 (AGAG…LDVI), 82–102 (GLSP…SVYG), 121–141 (MIAA…LWVV), 176–196 (LYSG…QFPA), 215–235 (LSPG…SILT), and 277–299 (LYRG…FTTY). The segment at 313-363 (ETNRSDDRRREEERKNLVSRRGEEEDKDLGLRESQTQSNKISTPHIPLGSK) is disordered. A compositionally biased stretch (basic and acidic residues) spans 315 to 343 (NRSDDRRREEERKNLVSRRGEEEDKDLGL). The segment covering 345–354 (ESQTQSNKIS) has biased composition (polar residues).

Belongs to the mitochondrial carrier (TC 2.A.29) family. Highly expressed in young meristematic shoot area, vascular bundles of leaves, developing siliques including the funiculi, petal veins, developing pollen and central cylinder of roots.

The protein localises to the mitochondrion membrane. Inhibited by pyridoxal 5'-phosphate, bathophenanthroline, tannic acid, mersalyl, mercuric chloride, p-hydroxymercuribenzoate, p-hydroxymercuribenzoate sulfonate, bromocresol purple and N-ethylmaleimide. Functionally, mediates the NAD(+) import into chloroplast. Favors the NAD(+)(in)/ADP or AMP(out) antiport exchange, but is also able to catalyze a low unidirectional transport (uniport) of NAD(+). Transports NAD(+), nicotinic acid adenine dinucleotide, nicotinamide mononucleotide, nicotinic acid mononucleotide, FAD, FMN, TTP, TDP, TMP, UTP, UDP, UMP, CTP, CDP, CMP, GTP, GDP, GMP, 3'-AMP, ATP, ADP and AMP, has low transport activity with cAMP, NADH and alpha-NAD(+), and has no activity with NADP(+), NADPH, nicotinamide, nicotinic acid, adenosine, thiamine mono- or diphosphate, inorganic phosphate, CoA, folate, NaCl, malate, malonate, citrate, fumarate, aspartate, glutamate, S-adenosylmethionine, lysine, arginine, and ornithine. This is Nicotinamide adenine dinucleotide transporter 2, mitochondrial (NDT2) from Arabidopsis thaliana (Mouse-ear cress).